The sequence spans 361 residues: G2/mitotic-specific cyclin-B1 (361 aa).

Polar residues predominate over residues 1–13; that stretch reads MLRATNNRRTSNN. The tract at residues 1–33 is disordered; it reads MLRATNNRRTSNNVEKDSLQMAKHGNGPLKPVN.

The protein belongs to the cyclin family. Cyclin AB subfamily. In terms of assembly, interacts with the CDK1 protein kinase to form a serine/threonine kinase holoenzyme complex also known as maturation promoting factor (MPF). The cyclin subunit imparts substrate specificity to the complex. Interacts with E3 ubiquitin-protein ligase etc-1. Post-translationally, ubiquitinated by etc-1 likely during meiosis, resulting in its degradation.

It is found in the cytoplasm. In terms of biological role, essential for the control of the cell cycle at the G2/M (mitosis) transition. The protein is G2/mitotic-specific cyclin-B1 (cyb-1) of Caenorhabditis elegans.